The sequence spans 193 residues: Peptidyl-tRNA hydrolase (193 aa).

Tyrosine 17 is a binding site for tRNA. The active-site Proton acceptor is histidine 22. TRNA is bound by residues tyrosine 68, asparagine 70, and asparagine 116.

Belongs to the PTH family. In terms of assembly, monomer.

It localises to the cytoplasm. The enzyme catalyses an N-acyl-L-alpha-aminoacyl-tRNA + H2O = an N-acyl-L-amino acid + a tRNA + H(+). In terms of biological role, hydrolyzes ribosome-free peptidyl-tRNAs (with 1 or more amino acids incorporated), which drop off the ribosome during protein synthesis, or as a result of ribosome stalling. Functionally, catalyzes the release of premature peptidyl moieties from peptidyl-tRNA molecules trapped in stalled 50S ribosomal subunits, and thus maintains levels of free tRNAs and 50S ribosomes. This is Peptidyl-tRNA hydrolase from Chromobacterium violaceum (strain ATCC 12472 / DSM 30191 / JCM 1249 / CCUG 213 / NBRC 12614 / NCIMB 9131 / NCTC 9757 / MK).